The primary structure comprises 379 residues: S-(hydroxymethyl)glutathione dehydrogenase (379 aa).

Residue cysteine 47 coordinates Zn(2+). Histidine 48 serves as a coordination point for NAD(+). Positions 69, 70, 99, 102, 105, 113, and 176 each coordinate Zn(2+). NAD(+)-binding positions include 201–206 (GAGCIG), aspartate 225, and 296–298 (IGV).

This sequence belongs to the zinc-containing alcohol dehydrogenase family. Class-III subfamily. Zn(2+) serves as cofactor.

The catalysed reaction is a primary alcohol + NAD(+) = an aldehyde + NADH + H(+). The enzyme catalyses a secondary alcohol + NAD(+) = a ketone + NADH + H(+). It catalyses the reaction S-(hydroxymethyl)glutathione + NADP(+) = S-formylglutathione + NADPH + H(+). It carries out the reaction S-(hydroxymethyl)glutathione + NAD(+) = S-formylglutathione + NADH + H(+). The catalysed reaction is S-nitrosoglutathione + NADH + H(+) = S-(hydroxysulfenamide)glutathione + NAD(+). Functionally, oxidizes long-chain alcohols and, in the presence of glutathione, is able to oxidize formaldehyde. Also acts as a S-nitroso-glutathione reductase by catalyzing the NADH-dependent reduction of S-nitrosoglutathione, thereby regulating protein S-nitrosylation. The sequence is that of S-(hydroxymethyl)glutathione dehydrogenase (FLD1) from Komagataella pastoris (Yeast).